The primary structure comprises 475 residues: Beta-amyrin 16-alpha-hydroxylase CYP87D16 (475 aa).

A helical transmembrane segment spans residues 3-23 (VVGLIGVAVVTILITQYVYKW). A heme-binding site is contributed by Cys423.

Belongs to the cytochrome P450 family. Heme is required as a cofactor.

The protein resides in the membrane. It carries out the reaction beta-amyrin + reduced [NADPH--hemoprotein reductase] + O2 = 16alpha-hydroxy-beta-amyrin + oxidized [NADPH--hemoprotein reductase] + H2O + H(+). Its function is as follows. Involved in the biosynthetic pathway of maesasaponins, which are oleanane-type saponins with diverse biological activities. Catalyzes the C-16alpha oxidation of beta-amyrin to form 16alpha-hydroxy-beta-amyrin. The polypeptide is Beta-amyrin 16-alpha-hydroxylase CYP87D16 (Maesa lanceolata (False assegai)).